The chain runs to 250 residues: Flavin-dependent thymidylate synthase (250 aa).

The ThyX domain occupies 7–233; sequence LRVQLIAKTD…PAVFADFEIA (227 aa). FAD is bound by residues Ser-71, 95-97, and Gln-103; that span reads RHR. Residues 92–95, 103–107, and Arg-172 contribute to the dUMP site; these read ELIR and QLSQR. The ThyX motif signature appears at 95–105; it reads RHRHFSYSQLS. Residues 188–190 and His-194 each bind FAD; that span reads NYR. Arg-199 is a dUMP binding site. The active-site Involved in ionization of N3 of dUMP, leading to its activation is the Arg-199.

This sequence belongs to the thymidylate synthase ThyX family. In terms of assembly, homotetramer. FAD serves as cofactor.

It catalyses the reaction dUMP + (6R)-5,10-methylene-5,6,7,8-tetrahydrofolate + NADPH + H(+) = dTMP + (6S)-5,6,7,8-tetrahydrofolate + NADP(+). It participates in pyrimidine metabolism; dTTP biosynthesis. Its function is as follows. Catalyzes the reductive methylation of 2'-deoxyuridine-5'-monophosphate (dUMP) to 2'-deoxythymidine-5'-monophosphate (dTMP) while utilizing 5,10-methylenetetrahydrofolate (mTHF) as the methyl donor, and NADPH and FADH(2) as the reductant. The protein is Flavin-dependent thymidylate synthase of Mycobacterium avium (strain 104).